Consider the following 457-residue polypeptide: Keratin, type II cytoskeletal 7 (457 aa).

The residue at position 2 (Ser-2) is an N-acetylserine. Ser-2 carries the phosphoserine modification. Residues 2-84 (SIHFSSRSTA…DPTIQQVRQE (83 aa)) are head. Ser-7 carries O-linked (GlcNAc) serine glycosylation. Arg-15 carries the dimethylated arginine; alternate modification. Arg-15 is subject to Omega-N-methylarginine; alternate. A phosphoserine mark is found at Ser-47 and Ser-65. The coil 1A stretch occupies residues 84 to 120 (EEREQIKTLNNKFASFIDKVRFLEQQNKMLETKWALL). The IF rod domain occupies 85–397 (EREQIKTLNN…KLLEGEESRL (313 aa)). Residue Thr-91 is modified to Phosphothreonine. Residues 121 to 138 (QEQKSAKSSQLPRIFEAQ) are linker 1. A Glycyl lysine isopeptide (Lys-Gly) (interchain with G-Cter in SUMO2) cross-link involves residue Lys-124. The segment at 139–230 (IAGLRQQLET…TLHETELAEL (92 aa)) is coil 1B. Residue Lys-173 is modified to N6-acetyllysine. Residues Ser-211, Ser-246, and Ser-248 each carry the phosphoserine modification. Residues 231-254 (QSQISDTSVVLSMDNSRSLDLDGI) are linker 12. The segment at 255–393 (IADVKAQYEE…ATYRKLLEGE (139 aa)) is coil 2. Glycyl lysine isopeptide (Lys-Gly) (interchain with G-Cter in SUMO2) cross-links involve residues Lys-259 and Lys-280. A Phosphothreonine modification is found at Thr-283. Glycyl lysine isopeptide (Lys-Gly) (interchain with G-Cter in SUMO2) cross-links involve residues Lys-290 and Lys-325. The segment at 394–457 (ESRLSGDGMG…TSTTRRGTHN (64 aa)) is tail.

This sequence belongs to the intermediate filament family. As to quaternary structure, heterotetramer of two type I and two type II keratins. Interacts with eukaryotic translation initiator factor 3 (eIF3) subunit EIF3S10. Interacts with GPER1. Post-translationally, arg-15 is dimethylated, probably to asymmetric dimethylarginine. Expressed in most simple epithelia tested including liver, lactating mammary gland, lung, kidney, stomach, duodenum, colon, oviduct, uterus, pancreas, epididymis, prostate, preputial gland and mesothelium, and in most stratified epithelia tested including dorsal skin, paw/toe, tail, tongue, cervix, forestomach, and bladder. Also expressed in Henle layer of the inner root sheath of whisker follicle.

In terms of biological role, blocks interferon-dependent interphase and stimulates DNA synthesis in cells. In Mus musculus (Mouse), this protein is Keratin, type II cytoskeletal 7.